A 533-amino-acid polypeptide reads, in one-letter code: Acyl-CoA-binding domain-containing protein 5 (533 aa).

Residues 42 to 131 form the ACB domain; that stretch reads HETRFEAAVK…MKKILETMPM (90 aa). An acyl-CoA-binding positions include 53–62, 73–77, Lys99, and Tyr118; these read IQSLPKNGSF and YSFYK. The segment at 182–227 is disordered; it reads TPNAKTVNGKAESSDSGAESEEEAAQEDPKRPEPRDSDKKMMKKSA. Phosphoserine is present on residues Ser194, Ser195, Ser197, and Ser201. Positions 208 to 227 are enriched in basic and acidic residues; sequence EDPKRPEPRDSDKKMMKKSA. A phosphoserine mark is found at Ser244 and Ser314. The segment at 339–443 is disordered; sequence GGNPSQPLES…ERWGSDRGSR (105 aa). Positions 374–383 are enriched in basic and acidic residues; the sequence is GKGEVKRGGE. Ser429 carries the post-translational modification Phosphoserine. The span at 432–442 shows a compositional bias: basic and acidic residues; that stretch reads DGERWGSDRGS. Residues 448–478 adopt a coiled-coil conformation; the sequence is EQIALVLMRLQEDMQNVLQRLHKLEMLAASQ. Lys470 bears the N6-acetyllysine mark. Residues 503–525 form a helical membrane-spanning segment; sequence SPGALTFAIIWPFIAQWLVHLYY.

The protein belongs to the ATG37 family. Highly expressed in brain and liver. Lower levels of expression in spleen and heart.

Its subcellular location is the peroxisome membrane. Acyl-CoA binding protein which acts as the peroxisome receptor for pexophagy but is dispensable for aggrephagy and nonselective autophagy. Binds medium- and long-chain acyl-CoA esters. The protein is Acyl-CoA-binding domain-containing protein 5 (ACBD5) of Bos taurus (Bovine).